The following is a 280-amino-acid chain: uncharacterized protein (280 aa).

Basic residues predominate over residues 1 to 10; sequence MSSSIKKLKK. The interval 1-45 is disordered; the sequence is MSSSIKKLKKDTKDTDKTPSKKIYQETHNSEDSEDSEDSDNENNT. The segment covering 11–31 has biased composition (basic and acidic residues); it reads DTKDTDKTPSKKIYQETHNSE. Residues 32–41 are compositionally biased toward acidic residues; the sequence is DSEDSEDSDN.

This is an uncharacterized protein from Acanthamoeba polyphaga mimivirus (APMV).